Reading from the N-terminus, the 190-residue chain is Cytoglobin (190 aa).

The disordered stretch occupies residues 1–21; the sequence is MEKVPGDMEIERRERSEELSE. Positions 18 to 167 constitute a Globin domain; it reads ELSEAERKAV…IYSHVTAAYK (150 aa). The cysteines at positions 38 and 83 are disulfide-linked. Heme b contacts are provided by His81 and His113.

This sequence belongs to the globin family. In terms of assembly, monomeric. Homodimer; disulfide-linked in vitro. Also homooligomeric in vitro. Post-translationally, the formation of an intramolecular disulfide bond between cysteines Cys-38 and Cys-83 specifically enhances the nitrite reductase activity. In terms of tissue distribution, expressed in brain and retina by non-neuronal cells (at protein level). This is the major globin expressed in vascular smooth muscle and is not present in the endothelium (at protein level).

Its subcellular location is the cytoplasm. The protein localises to the nucleus. It carries out the reaction Fe(II)-heme b-[protein] + nitric oxide + O2 = Fe(III)-heme b-[protein] + nitrate. The enzyme catalyses 2 superoxide + 2 H(+) = H2O2 + O2. The catalysed reaction is Fe(III)-heme b-[protein] + nitric oxide + H2O = Fe(II)-heme b-[protein] + nitrite + 2 H(+). It catalyses the reaction H2O2 + AH2 = A + 2 H2O. With respect to regulation, the nitric oxide dioxygenase activity is activated by a reducing system composed of cytochrome b5, its upstream reductase CYB5R3 and NADH. Probable multifunctional globin with a hexacoordinated heme iron required for the catalysis of various reactions depending on redox condition of the cell as well as oxygen availability. Has a nitric oxide dioxygenase (NOD) activity and is most probably involved in cell-mediated and oxygen-dependent nitric oxide consumption. By scavenging this second messenger may regulate several biological processes including endothelium-mediated vasodilation and vascular tone. Under normoxic conditions functions as a nitric oxide dioxygenase (NOD) but under hypoxic conditions the globin may switch its function to that of a nitrite (NO2) reductase (NiR), generating nitric oxide. Could also have peroxidase and superoxide dismutase activities, detoxifying reactive oxygen species and protecting cells against oxidative stress. Also binds dioxygen with low affinity and could function as an oxygen sensor but has probably no function as a respiratory oxygen carrier. The sequence is that of Cytoglobin from Mus musculus (Mouse).